Reading from the N-terminus, the 625-residue chain is tRNA uridine 5-carboxymethylaminomethyl modification enzyme MnmG (625 aa).

14–19 (GAGHAG) provides a ligand contact to FAD. 273-287 (GPRYCPSIEDKIVRF) serves as a coordination point for NAD(+).

The protein belongs to the MnmG family. Homodimer. Heterotetramer of two MnmE and two MnmG subunits. Requires FAD as cofactor.

The protein localises to the cytoplasm. NAD-binding protein involved in the addition of a carboxymethylaminomethyl (cmnm) group at the wobble position (U34) of certain tRNAs, forming tRNA-cmnm(5)s(2)U34. The protein is tRNA uridine 5-carboxymethylaminomethyl modification enzyme MnmG of Clostridium botulinum (strain Hall / ATCC 3502 / NCTC 13319 / Type A).